Here is a 157-residue protein sequence, read N- to C-terminus: Mediator of RNA polymerase II transcription subunit 22 (157 aa).

Belongs to the Mediator complex subunit 22 family. As to quaternary structure, component of the Mediator complex.

Its subcellular location is the nucleus. Its function is as follows. Component of the Mediator complex, a coactivator involved in the regulated transcription of nearly all RNA polymerase II-dependent genes. Mediator functions as a bridge to convey information from gene-specific regulatory proteins to the basal RNA polymerase II transcription machinery. Mediator is recruited to promoters by direct interactions with regulatory proteins and serves as a scaffold for the assembly of a functional preinitiation complex with RNA polymerase II and the general transcription factors. This is Mediator of RNA polymerase II transcription subunit 22 (mdt-22) from Caenorhabditis elegans.